The sequence spans 381 residues: Hps1-dma1 cluster transcription factor tfc7 (381 aa).

Residues 10-37 (CDHCSATKIKCTQERPQCTRCRALGRDC) constitute a DNA-binding region (zn(2)-C6 fungal-type). Positions 41 to 88 (RSLRAGKPPRSSQGLNRKISNAPVLPRQNTPVSNPTSMSSKPEHWPTM) are disordered. Polar residues-rich tracts occupy residues 50 to 59 (RSSQGLNRKI) and 67 to 80 (RQNTPVSNPTSMSS).

It localises to the nucleus. In terms of biological role, transcription factor that regulates the expression of the hps1-dma1 gene cluster that probably mediates the biosynthesis a derivative of cyclopiazonic acid (CPA). Further studies are required to whether the CPA-like hps1-dma1 cluster is functional or a non-functional relic reflecting evolution of D.septosporum. This Dothistroma septosporum (strain NZE10 / CBS 128990) (Red band needle blight fungus) protein is Hps1-dma1 cluster transcription factor tfc7 (tfc7).